A 223-amino-acid polypeptide reads, in one-letter code: Agamous-like MADS-box protein AGL11 (223 aa).

Residues 1–61 (MGRGKIEIKR…GRVYEYSNNN (61 aa)) form the MADS-box domain. In terms of domain architecture, K-box spans 87–177 (AQYYQQESAK…RTKIAEVERL (91 aa)).

As to expression, expressed in flowers and seeds. Expressed in endotesta cell layer of developing seeds.

The protein localises to the nucleus. Functionally, probable transcription factor involved in seed development. Plays a role in seed morphogenesis by promoting the correct development of endotesta cell layer, which directs the further development of the seed coat, the endosperm, and consequently the embryo. The chain is Agamous-like MADS-box protein AGL11 from Vitis vinifera (Grape).